A 420-amino-acid chain; its full sequence is Aminoacyltransferase FemA (420 aa).

Belongs to the FemABX family. Homodimer. Interacts with FemB.

It localises to the cytoplasm. It carries out the reaction beta-D-GlcNAc-(1-&gt;4)-Mur2Ac(oyl-L-Ala-D-isoglutaminyl-L-Lys-(N(6)-Gly)-D-Ala-D-Ala)-di-trans,octa-cis-undecaprenyl diphosphate + 2 glycyl-tRNA(Gly) = MurNAc-L-Ala-D-isoglutaminyl-L-Lys-(N(6)-tri-Gly)-D-Ala-D-Ala-diphospho-di-trans,octa-cis-undecaprenyl-GlcNAc + 2 tRNA(Gly) + 2 H(+). Functionally, catalyzes the formation of the pentaglycine interpeptide bridge, which is characteristic of the S.aureus peptidoglycan. Adds glycines 2 and 3 of the pentaglycine bridge, using glycyl-tRNA(Gly) as donor. This is Aminoacyltransferase FemA (femA) from Staphylococcus aureus (strain bovine RF122 / ET3-1).